The primary structure comprises 345 residues: Adenine deaminase (345 aa).

Histidine 20, histidine 22, and histidine 204 together coordinate Zn(2+). Glutamate 207 serves as the catalytic Proton donor. Aspartate 285 contacts Zn(2+). Aspartate 286 contacts substrate.

This sequence belongs to the metallo-dependent hydrolases superfamily. Adenosine and AMP deaminases family. Adenine deaminase type 2 subfamily. The cofactor is Zn(2+).

The enzyme catalyses adenine + H2O + H(+) = hypoxanthine + NH4(+). Functionally, catalyzes the hydrolytic deamination of adenine to hypoxanthine. Plays an important role in the purine salvage pathway and in nitrogen catabolism. This Ralstonia pickettii (strain 12J) protein is Adenine deaminase.